The sequence spans 1992 residues: E3 ubiquitin-protein ligase TRIP12 (1992 aa).

Residues methionine 1–glycine 10 show a composition bias toward polar residues. The segment at methionine 1–glutamate 398 is disordered. Position 2 is an N-acetylserine (serine 2). The residue at position 12 (serine 12) is a Phosphoserine. A compositionally biased stretch (polar residues) spans arginine 18 to aspartate 27. Residues serine 29–valine 43 show a composition bias toward low complexity. Positions aspartate 48–arginine 70 are enriched in basic and acidic residues. Residues serine 77, serine 85, and serine 100 each carry the phosphoserine modification. A compositionally biased stretch (polar residues) spans proline 78–serine 88. The segment covering serine 154 to glutamate 164 has biased composition (polar residues). Composition is skewed to low complexity over residues proline 175–alanine 188 and serine 196–alanine 215. Lysine 181 carries the N6-acetyllysine modification. Residues proline 280–proline 290 are compositionally biased toward polar residues. A phosphoserine mark is found at serine 310 and serine 312. Low complexity predominate over residues glycine 330–glycine 339. Residues glycine 346 to aspartate 358 are compositionally biased toward basic and acidic residues. The span at asparagine 362–alanine 371 shows a compositional bias: polar residues. Positions methionine 749–lysine 836 constitute a WWE domain. Residues serine 938–serine 1044 form a disordered region. Serine 942 carries the post-translational modification Phosphoserine. Residues threonine 948–valine 960 are compositionally biased toward polar residues. Low complexity predominate over residues asparagine 961–alanine 973. Residues serine 991 and serine 997 each carry the phosphoserine modification. Residues lysine 1001 to lysine 1014 show a composition bias toward basic residues. A Phosphoserine modification is found at serine 1016. The segment covering proline 1017 to asparagine 1026 has biased composition (basic and acidic residues). Low complexity predominate over residues lysine 1029–serine 1040. Residues serine 1030, serine 1317, serine 1322, serine 1329, and serine 1376 each carry the phosphoserine modification. Threonine 1377 carries the post-translational modification Phosphothreonine. Disordered regions lie at residues serine 1407–histidine 1434 and threonine 1568–aspartate 1587. At lysine 1425 the chain carries N6-acetyllysine. Serine 1427 bears the Phosphoserine mark. Residues glutamate 1496–proline 1570 are K-box. The region spanning proline 1885–serine 1992 is the HECT domain. Cysteine 1959 acts as the Glycyl thioester intermediate in catalysis.

It belongs to the UPL family. K-HECT subfamily. Interacts with MYC; leading to disrupt interaction with isoform p19ARF/ARF of CDKN2A. Interacts with TRADD; leading to disrupt interaction with isoform p19ARF/ARF of CDKN2A. Interacts with SMARCC1; leading to disrupt interaction with SMARCE1.

It localises to the nucleus. The protein resides in the nucleoplasm. It catalyses the reaction S-ubiquitinyl-[E2 ubiquitin-conjugating enzyme]-L-cysteine + [acceptor protein]-L-lysine = [E2 ubiquitin-conjugating enzyme]-L-cysteine + N(6)-ubiquitinyl-[acceptor protein]-L-lysine.. The protein operates within protein modification; protein ubiquitination. E3 ubiquitin-protein ligase involved in ubiquitin fusion degradation (UFD) pathway and regulation of DNA repair. Part of the ubiquitin fusion degradation (UFD) pathway, a process that mediates ubiquitination of protein at their N-terminus, regardless of the presence of lysine residues in target proteins. Acts as a key regulator of DNA damage response by acting as a suppressor of RNF168, an E3 ubiquitin-protein ligase that promotes accumulation of 'Lys-63'-linked histone H2A and H2AX at DNA damage sites, thereby acting as a guard against excessive spreading of ubiquitinated chromatin at damaged chromosomes. In normal cells, mediates ubiquitination and degradation of isoform p19ARF/ARF of CDKN2A, a lysine-less tumor suppressor required for p53/TP53 activation under oncogenic stress. In cancer cells, however, isoform p19ARF/ARF and TRIP12 are located in different cell compartments, preventing isoform p19ARF/ARF ubiquitination and degradation. Does not mediate ubiquitination of isoform p16-INK4a of CDKN2A. Also catalyzes ubiquitination of NAE1 and SMARCE1, leading to their degradation. Ubiquitination and degradation of target proteins is regulated by interaction with proteins such as MYC, TRADD or SMARCC1, which disrupt the interaction between TRIP12 and target proteins. Mediates ubiquitination of ASXL1: following binding to N(6)-methyladenosine methylated DNA, ASXL1 is ubiquitinated by TRIP12, leading to its degradation and subsequent inactivation of the PR-DUB complex. The chain is E3 ubiquitin-protein ligase TRIP12 (TRIP12) from Bos taurus (Bovine).